Consider the following 366-residue polypeptide: Peroxisomal (S)-2-hydroxy-acid oxidase GLO4 (366 aa).

Residues 1 to 360 enclose the FMN hydroxy acid dehydrogenase domain; it reads MEDNLPVNVR…TRSHVMTEGD (360 aa). Y27 provides a ligand contact to a 2-oxocarboxylate. FMN is bound by residues 80 to 82, S109, 130 to 132, and T158; these read PTG and QLY. Residue Y132 participates in a 2-oxocarboxylate binding. R167 is an a 2-oxocarboxylate binding site. FMN is bound by residues K231 and S253. The Proton acceptor role is filled by H255. R258 is a binding site for a 2-oxocarboxylate. FMN is bound by residues 286 to 290 and 309 to 310; these read DGGIR and GR. The Microbody targeting signal signature appears at 364–366; that stretch reads SLL.

The protein belongs to the FMN-dependent alpha-hydroxy acid dehydrogenase family. As to quaternary structure, homotetramer. Binds to CATB and CATC; these interactions are disturbed by alpha-hydroxy-2-pyridinemethanesulfonic acid (HPMS) and salicylic acid (SA). FMN serves as cofactor.

It is found in the peroxisome. The catalysed reaction is a (2S)-2-hydroxycarboxylate + O2 = a 2-oxocarboxylate + H2O2. The protein operates within lipid metabolism; fatty acid metabolism. Its function is as follows. Oxidase that catalyzes the oxidation of a broad range of 2-hydroxyacids to the corresponding 2-oxoacids, with a reduction of O2 to H2O2. May be involved in a general medium- and long-chain fatty acid catabolic pathway such as alpha-oxidation. The polypeptide is Peroxisomal (S)-2-hydroxy-acid oxidase GLO4 (GLO4) (Oryza sativa subsp. japonica (Rice)).